We begin with the raw amino-acid sequence, 52 residues long: uncharacterized protein (52 aa).

A disordered region spans residues 24-52; it reads LRENPSKNVRTIPDAGDENSSFGHARVIA.

This is an uncharacterized protein from Treponema pallidum (strain Nichols).